The chain runs to 326 residues: Porin-like protein H (326 aa).

The signal sequence occupies residues 1 to 19; sequence MKKTLVALAILTAAGSANA.

This sequence belongs to the Gram-negative porin family. Oligomer.

Its subcellular location is the cell outer membrane. In terms of biological role, forms pores that allow passive diffusion of small molecules across the outer membrane. This chain is Porin-like protein H (ompH), found in Photobacterium profundum (strain SS9).